The following is a 623-amino-acid chain: Glutathione import ATP-binding protein GsiA (623 aa).

ABC transporter domains follow at residues 15-269 (VENL…RALL) and 314-564 (LRVR…RKLL). ATP-binding positions include 49–56 (GESGSGKS) and 357–364 (GESGSGKS).

This sequence belongs to the ABC transporter superfamily. Glutathione importer (TC 3.A.1.5.11) family. The complex is composed of two ATP-binding proteins (GsiA), two transmembrane proteins (GsiC and GsiD) and a solute-binding protein (GsiB).

The protein resides in the cell inner membrane. The catalysed reaction is glutathione(out) + ATP + H2O = glutathione(in) + ADP + phosphate + H(+). Inhibited by verapamil but not by carbonyl cyanide m-chlorophenylhydrazone (CCCP). Its function is as follows. Part of the ABC transporter complex GsiABCD involved in glutathione import. Responsible for energy coupling to the transport system. This chain is Glutathione import ATP-binding protein GsiA, found in Escherichia coli (strain K12).